The following is a 283-amino-acid chain: Phosphatidylglycerol--prolipoprotein diacylglyceryl transferase (283 aa).

Helical transmembrane passes span 18 to 38 (LFGHPIVWYGLLFALGLIILG), 59 to 79 (LAVYVFVGTIVGARLGHVLFY), 91 to 111 (IFVTWEGGLASHGGTIGIIIA), 124 to 144 (ILWVLDRLAVPTGIVAAMIRL), 185 to 205 (TQIYEALCYLAVFALCMWLYW), 213 to 233 (YSGLIVGVFLTGIFLSRFIIE), and 251 to 271 (GLNMGQLLSIPFVLAGIWLII). Residue arginine 143 participates in a 1,2-diacyl-sn-glycero-3-phospho-(1'-sn-glycerol) binding.

Belongs to the Lgt family.

The protein resides in the cell inner membrane. It carries out the reaction L-cysteinyl-[prolipoprotein] + a 1,2-diacyl-sn-glycero-3-phospho-(1'-sn-glycerol) = an S-1,2-diacyl-sn-glyceryl-L-cysteinyl-[prolipoprotein] + sn-glycerol 1-phosphate + H(+). Its pathway is protein modification; lipoprotein biosynthesis (diacylglyceryl transfer). Its function is as follows. Catalyzes the transfer of the diacylglyceryl group from phosphatidylglycerol to the sulfhydryl group of the N-terminal cysteine of a prolipoprotein, the first step in the formation of mature lipoproteins. The polypeptide is Phosphatidylglycerol--prolipoprotein diacylglyceryl transferase (Porphyromonas gingivalis (strain ATCC 33277 / DSM 20709 / CIP 103683 / JCM 12257 / NCTC 11834 / 2561)).